The following is a 379-amino-acid chain: Cytochrome b (379 aa).

4 consecutive transmembrane segments (helical) span residues 33 to 53, 77 to 98, 113 to 133, and 178 to 198; these read FGSL…FLAM, WTIR…FIHV, WNIG…GYVL, and FFAL…IHLL. Positions 83 and 97 each coordinate heme b. His182 and His196 together coordinate heme b. An a ubiquinone-binding site is contributed by His201. The next 4 membrane-spanning stretches (helical) occupy residues 226 to 246, 288 to 308, 320 to 340, and 347 to 367; these read TKDF…TLFY, PGGV…PFLQ, LSQF…WIGG, and FISI…FIMP.

It belongs to the cytochrome b family. In terms of assembly, the cytochrome bc1 complex contains 11 subunits: 3 respiratory subunits (MT-CYB, CYC1 and UQCRFS1), 2 core proteins (UQCRC1 and UQCRC2) and 6 low-molecular weight proteins (UQCRH/QCR6, UQCRB/QCR7, UQCRQ/QCR8, UQCR10/QCR9, UQCR11/QCR10 and a cleavage product of UQCRFS1). This cytochrome bc1 complex then forms a dimer. Heme b is required as a cofactor.

It is found in the mitochondrion inner membrane. Component of the ubiquinol-cytochrome c reductase complex (complex III or cytochrome b-c1 complex) that is part of the mitochondrial respiratory chain. The b-c1 complex mediates electron transfer from ubiquinol to cytochrome c. Contributes to the generation of a proton gradient across the mitochondrial membrane that is then used for ATP synthesis. The polypeptide is Cytochrome b (MT-CYB) (Lepilemur ruficaudatus (Red-tailed sportive lemur)).